The primary structure comprises 444 residues: Ribulose bisphosphate carboxylase large chain (444 aa).

The residue at position 5 (Lys-5) is an N6,N6,N6-trimethyllysine. Asn-114 and Thr-164 together coordinate substrate. Lys-166 functions as the Proton acceptor in the catalytic mechanism. Residue Lys-168 participates in substrate binding. Residues Lys-192, Asp-194, and Glu-195 each contribute to the Mg(2+) site. Lys-192 carries the N6-carboxylysine modification. Residue His-285 is the Proton acceptor of the active site. Positions 286, 318, and 370 each coordinate substrate.

This sequence belongs to the RuBisCO large chain family. Type I subfamily. As to quaternary structure, heterohexadecamer of 8 large chains and 8 small chains; disulfide-linked. The disulfide link is formed within the large subunit homodimers. Mg(2+) is required as a cofactor. Post-translationally, the disulfide bond which can form in the large chain dimeric partners within the hexadecamer appears to be associated with oxidative stress and protein turnover.

The protein resides in the plastid. The protein localises to the chloroplast. The catalysed reaction is 2 (2R)-3-phosphoglycerate + 2 H(+) = D-ribulose 1,5-bisphosphate + CO2 + H2O. It catalyses the reaction D-ribulose 1,5-bisphosphate + O2 = 2-phosphoglycolate + (2R)-3-phosphoglycerate + 2 H(+). Its function is as follows. RuBisCO catalyzes two reactions: the carboxylation of D-ribulose 1,5-bisphosphate, the primary event in carbon dioxide fixation, as well as the oxidative fragmentation of the pentose substrate in the photorespiration process. Both reactions occur simultaneously and in competition at the same active site. This is Ribulose bisphosphate carboxylase large chain from Ginkgo biloba (Ginkgo).